The sequence spans 39 residues: Photosystem II reaction center protein J (39 aa).

A helical transmembrane segment spans residues 9 to 29 (LWLVATVGGMAAITVLGIFIY).

This sequence belongs to the PsbJ family. PSII is composed of 1 copy each of membrane proteins PsbA, PsbB, PsbC, PsbD, PsbE, PsbF, PsbH, PsbI, PsbJ, PsbK, PsbL, PsbM, PsbT, PsbX, PsbY, PsbZ, Psb30/Ycf12, at least 3 peripheral proteins of the oxygen-evolving complex and a large number of cofactors. It forms dimeric complexes.

It is found in the plastid. It localises to the chloroplast thylakoid membrane. Functionally, one of the components of the core complex of photosystem II (PSII). PSII is a light-driven water:plastoquinone oxidoreductase that uses light energy to abstract electrons from H(2)O, generating O(2) and a proton gradient subsequently used for ATP formation. It consists of a core antenna complex that captures photons, and an electron transfer chain that converts photonic excitation into a charge separation. This chain is Photosystem II reaction center protein J, found in Porphyra purpurea (Red seaweed).